We begin with the raw amino-acid sequence, 218 residues long: 1-Cys peroxiredoxin PER1 (218 aa).

One can recognise a Thioredoxin domain in the interval Leu-4 to Thr-164. The Cysteine sulfenic acid (-SOH) intermediate role is filled by Cys-46. Positions Lys-194–Lys-217 match the Bipartite nuclear localization signal motif.

It belongs to the peroxiredoxin family. Prx6 subfamily. Embryo and aleurone cells.

The protein resides in the nucleus. The protein localises to the cytoplasm. The catalysed reaction is a hydroperoxide + [thioredoxin]-dithiol = an alcohol + [thioredoxin]-disulfide + H2O. Its function is as follows. Thiol-specific peroxidase that catalyzes the reduction of hydrogen peroxide and organic hydroperoxides to water and alcohols, respectively. Seems to contribute to the inhibition of germination during stress. This chain is 1-Cys peroxiredoxin PER1 (PER1), found in Hordeum vulgare (Barley).